A 216-amino-acid chain; its full sequence is Ribosomal RNA large subunit methyltransferase E (216 aa).

S-adenosyl-L-methionine is bound by residues Gly60, Trp62, Asp80, Asp96, and Asp121. Lys161 acts as the Proton acceptor in catalysis.

This sequence belongs to the class I-like SAM-binding methyltransferase superfamily. RNA methyltransferase RlmE family.

It localises to the cytoplasm. It carries out the reaction uridine(2552) in 23S rRNA + S-adenosyl-L-methionine = 2'-O-methyluridine(2552) in 23S rRNA + S-adenosyl-L-homocysteine + H(+). Its function is as follows. Specifically methylates the uridine in position 2552 of 23S rRNA at the 2'-O position of the ribose in the fully assembled 50S ribosomal subunit. The sequence is that of Ribosomal RNA large subunit methyltransferase E from Pseudomonas fluorescens (strain SBW25).